Reading from the N-terminus, the 334-residue chain is Phosphate acyltransferase (334 aa).

Belongs to the PlsX family. Homodimer. Probably interacts with PlsY.

The protein resides in the cytoplasm. The catalysed reaction is a fatty acyl-[ACP] + phosphate = an acyl phosphate + holo-[ACP]. The protein operates within lipid metabolism; phospholipid metabolism. Its function is as follows. Catalyzes the reversible formation of acyl-phosphate (acyl-PO(4)) from acyl-[acyl-carrier-protein] (acyl-ACP). This enzyme utilizes acyl-ACP as fatty acyl donor, but not acyl-CoA. In Desulfitobacterium hafniense (strain DSM 10664 / DCB-2), this protein is Phosphate acyltransferase.